The chain runs to 10746 residues: Extracellular matrix-binding protein ebh (10746 aa).

The first 39 residues, 1-39 (MNYRDKIQKFSIRKYTVGTFSTVIATLVFLGLNTSQAQA), serve as a signal peptide directing secretion. Polar residues-rich tracts occupy residues 41–59 (ETNQPASALKQKQQNGDTQ) and 67–113 (VQNS…SQNE). Disordered stretches follow at residues 41 to 174 (ETNQ…GNVQ), 246 to 274 (MPQRQQTSRRSSRIQTRSIESRAAEPRSV), and 1340 to 1372 (IAGNEKAQAEAGGRPNYKTTGYSQSNPTSDGQR). Over residues 120–130 (AAATPTQSAKA) the composition is skewed to low complexity. Basic and acidic residues predominate over residues 132–158 (SKHEQSESRAANKKENDNKATHVESHE). Over residues 162 to 173 (VTASDSSDSGNV) the composition is skewed to polar residues. Residues 248–263 (QRQQTSRRSSRIQTRS) show a composition bias toward low complexity. Residues 1356–1372 (YKTTGYSQSNPTSDGQR) are compositionally biased toward polar residues. 59 consecutive FIVAR domains span residues 2520–2576 (AKNH…VNAA), 2606–2662 (SKNN…ISDE), 2683–2746 (DTHE…VQTA), 2776–2832 (AKTK…IAAK), 2860–2915 (AKTQ…IRQN), 2943–2998 (AKNQ…INTN), 3026–3081 (AKTQ…INDK), 3150–3208 (AMTK…VNQK), 3276–3335 (AMTG…VNNA), 3403–3461 (AMGN…VNSA), 3529–3587 (AMGN…VTEA), 3655–3713 (AMNT…ITQK), 3781–3839 (AMAS…VEAA), 3907–3965 (AMGN…VEQA), 4033–4091 (AMGQ…VTAA), 4159–4217 (AMKG…ITQA), 4285–4343 (QMGN…VEAA), 4411–4469 (AMAN…VENA), 4537–4595 (AMGT…INQI), 4663–4721 (AMGQ…VDRA), 4789–4847 (AMNS…VDNA), 4915–4973 (AMGA…INGM), 5041–5099 (AMTV…VNSA), 5167–5225 (AMKG…ITQA), 5293–5351 (AMHS…VEQA), 5419–5477 (AMGQ…VERA), 5545–5603 (AMTA…VTNA), 5671–5729 (AMKG…INQA), 5797–5855 (AMTN…VESA), 5923–5981 (AMSN…VEQA), 6049–6107 (AMNQ…INQK), 6175–6232 (AMGN…VQAA), 6300–6358 (AMGQ…VEAA), 6426–6484 (AMQR…VEQA), 6552–6610 (AMDQ…VTAA), 6678–6736 (AMNQ…VTQA), 6804–6862 (AMER…VEAA), 6930–6988 (AMGN…VEAA), 7056–7114 (AMDK…INQA), 7182–7240 (AMGN…VEQA), 7308–7366 (AMTQ…ITAA), 7434–7492 (AMTQ…IQQA), 7560–7618 (AMTN…VEQA), 7686–7744 (AMTQ…VAQA), 7812–7870 (AMGT…VTQA), 7938–7996 (AMSN…ITRA), 8064–8125 (AMDQ…ITNE), 8190–8251 (AMDQ…ITNE), 8316–8374 (AMEL…VNRA), 8442–8500 (AMGN…VEQA), 8568–8625 (AMHG…INQA), 8693–8751 (LMDA…VTSA), 8819–8877 (AMKA…IDQA), 8945–9003 (AMEA…VEQL), 9071–9129 (AMQA…VEQL), 9197–9255 (AMET…VDQA), 9323–9377 (SMDQ…VDQA), 9445–9504 (VMDQ…VIKL), and 9699–9755 (AMET…INGA). The segment covering 7066–7080 (DNATTKQNQNYTDSS) has biased composition (polar residues). A disordered region spans residues 7066–7085 (DNATTKQNQNYTDSSPNKKD). The span at 10492–10507 (DHSKPSSNSDGQSNSH) shows a compositional bias: polar residues. The tract at residues 10492–10530 (DHSKPSSNSDGQSNSHLHVGYGTVNHPFNSSPIGHKKKL) is disordered. The chain crosses the membrane as a helical span at residues 10552–10572 (IKNALGVVGISGLLASFWFFI). A disordered region spans residues 10649–10746 (RRKEDEEDVE…KKKKSKKNKK (98 aa)). Basic and acidic residues predominate over residues 10664-10674 (TDEKVLQDNEH). Over residues 10719–10746 (KGKKSASKKPSKKVAAKKKKKKSKKNKK) the composition is skewed to basic residues.

Its subcellular location is the cell membrane. The chain is Extracellular matrix-binding protein ebh (ebh) from Staphylococcus aureus (strain MRSA252).